We begin with the raw amino-acid sequence, 400 residues long: MAKLIVSDLDVKDKKVLIRVDFNVPIKDGKIGDDNRIVAALPTIKYVIEHDGKAILFSHLGRIKSEDDKKGLSLRPVAERLSNLLNKPVTFVPVTEGEQLETAINNMNDGDVLVVENTRFEDVVNGEQVKRESGNDPELGKYWASLGDVYVNDAFGTAHRSHASNVGIASNMDQVAAGFLMEKEIKFLGDAVDNPKHPFVAILGGAKVSDKIGVIDHLISKADKIIIGGGMTYTFYAAKGMGIGNSLVEKDKIELAKSIIEKAGDKLVLPSDSIVAEKFDNDVPSKVVEGSIPDGYMALDIGPKSIEEFEDVLRDAKTVVWNGPMGVFEMSNYAKGTLEIGKFLGTLSDATTIVGGGDSTAAVKQLGVGDKLTHISTGGGASLEYLEGKELPGIAAISEK.

Substrate contacts are provided by residues 21 to 23 (DFN), Arg36, 59 to 62 (HLGR), Arg119, and Arg160. ATP-binding positions include Lys211, Glu329, and 356–359 (GGDS).

The protein belongs to the phosphoglycerate kinase family. In terms of assembly, monomer.

The protein resides in the cytoplasm. The enzyme catalyses (2R)-3-phosphoglycerate + ATP = (2R)-3-phospho-glyceroyl phosphate + ADP. Its pathway is carbohydrate degradation; glycolysis; pyruvate from D-glyceraldehyde 3-phosphate: step 2/5. This Lactiplantibacillus plantarum (strain ATCC BAA-793 / NCIMB 8826 / WCFS1) (Lactobacillus plantarum) protein is Phosphoglycerate kinase.